The sequence spans 341 residues: MSLVGQMYKREKPIPEWKTLMLRELEELFSKHRVVLFADLTGTPTFVVQRVRKKLWKKYPMMVAKKRIILRAMKAAGLELDDNLLDDLVRGQMLLVFADGNPFKIVKEVEKEKVAMPVKPGDKAETEIRIPEGMTNLTPGPILSVFGKLRIQYQVRGGKIYIAKETVVAKPGDVISEDLAGLLMALGIRPIEKGVRVKFAIDGGVLITEDLLRPDIEAFRGDVIDAAKEALGLATEIVYMPVPEAVESAIVKAALAASALAAETGFIAPGTVEDVVRKAIAEEAAVVALLGDKARELGIEEAAPAAAPAAEEKAEEEKKEEEEEKKEDQELSGLDSIFGGF.

Residues 301–341 (EAAPAAAPAAEEKAEEEKKEEEEEKKEDQELSGLDSIFGGF) are disordered.

Belongs to the universal ribosomal protein uL10 family. In terms of assembly, part of the 50S ribosomal subunit. Forms part of the ribosomal stalk which helps the ribosome interact with GTP-bound translation factors. Forms a heptameric L10(L12)2(L12)2(L12)2 complex, where L10 forms an elongated spine to which the L12 dimers bind in a sequential fashion.

In terms of biological role, forms part of the ribosomal stalk, playing a central role in the interaction of the ribosome with GTP-bound translation factors. The protein is Large ribosomal subunit protein uL10 of Aeropyrum pernix (strain ATCC 700893 / DSM 11879 / JCM 9820 / NBRC 100138 / K1).